We begin with the raw amino-acid sequence, 176 residues long: RING-H2 finger protein ATL73 (176 aa).

The signal sequence occupies residues 1–16; the sequence is MARFLLATQATPTISA. Residues 42-62 form a helical membrane-spanning segment; sequence VIILAALLCALICALGINSVL. Residues 113-155 form an RING-type; atypical zinc finger; the sequence is CLICLGDFVEGETVRVLPKCNHGFHVKCIDTWLLSHSSCPTCR.

The protein belongs to the RING-type zinc finger family. ATL subfamily.

The protein localises to the membrane. The enzyme catalyses S-ubiquitinyl-[E2 ubiquitin-conjugating enzyme]-L-cysteine + [acceptor protein]-L-lysine = [E2 ubiquitin-conjugating enzyme]-L-cysteine + N(6)-ubiquitinyl-[acceptor protein]-L-lysine.. The protein operates within protein modification; protein ubiquitination. The protein is RING-H2 finger protein ATL73 (ATL73) of Arabidopsis thaliana (Mouse-ear cress).